The following is a 565-amino-acid chain: Proline--tRNA ligase (565 aa).

It belongs to the class-II aminoacyl-tRNA synthetase family. ProS type 1 subfamily. Homodimer.

It is found in the cytoplasm. The catalysed reaction is tRNA(Pro) + L-proline + ATP = L-prolyl-tRNA(Pro) + AMP + diphosphate. Its function is as follows. Catalyzes the attachment of proline to tRNA(Pro) in a two-step reaction: proline is first activated by ATP to form Pro-AMP and then transferred to the acceptor end of tRNA(Pro). As ProRS can inadvertently accommodate and process non-cognate amino acids such as alanine and cysteine, to avoid such errors it has two additional distinct editing activities against alanine. One activity is designated as 'pretransfer' editing and involves the tRNA(Pro)-independent hydrolysis of activated Ala-AMP. The other activity is designated 'posttransfer' editing and involves deacylation of mischarged Ala-tRNA(Pro). The misacylated Cys-tRNA(Pro) is not edited by ProRS. The polypeptide is Proline--tRNA ligase (Bacillus pumilus (strain SAFR-032)).